A 590-amino-acid chain; its full sequence is Aspartate--tRNA(Asp/Asn) ligase (590 aa).

L-aspartate is bound at residue Glu175. The interval 199–202 is aspartate; that stretch reads QQFK. L-aspartate contacts are provided by Arg221 and His452. 221-223 serves as a coordination point for ATP; sequence RDE. Glu485 contacts ATP. Residue Arg492 participates in L-aspartate binding. An ATP-binding site is contributed by 537 to 540; sequence GIDR.

Belongs to the class-II aminoacyl-tRNA synthetase family. Type 1 subfamily. As to quaternary structure, homodimer.

It is found in the cytoplasm. It catalyses the reaction tRNA(Asx) + L-aspartate + ATP = L-aspartyl-tRNA(Asx) + AMP + diphosphate. In terms of biological role, aspartyl-tRNA synthetase with relaxed tRNA specificity since it is able to aspartylate not only its cognate tRNA(Asp) but also tRNA(Asn). Reaction proceeds in two steps: L-aspartate is first activated by ATP to form Asp-AMP and then transferred to the acceptor end of tRNA(Asp/Asn). This is Aspartate--tRNA(Asp/Asn) ligase from Dinoroseobacter shibae (strain DSM 16493 / NCIMB 14021 / DFL 12).